The chain runs to 264 residues: 3-methyl-2-oxobutanoate hydroxymethyltransferase 2 (264 aa).

Positions 44 and 83 each coordinate Mg(2+). 3-methyl-2-oxobutanoate-binding positions include 44-45 (DS), D83, and K111. E113 provides a ligand contact to Mg(2+). E180 (proton acceptor) is an active-site residue.

Belongs to the PanB family. In terms of assembly, homodecamer; pentamer of dimers. Mg(2+) serves as cofactor.

The protein localises to the cytoplasm. It catalyses the reaction 3-methyl-2-oxobutanoate + (6R)-5,10-methylene-5,6,7,8-tetrahydrofolate + H2O = 2-dehydropantoate + (6S)-5,6,7,8-tetrahydrofolate. It functions in the pathway cofactor biosynthesis; (R)-pantothenate biosynthesis; (R)-pantoate from 3-methyl-2-oxobutanoate: step 1/2. Functionally, catalyzes the reversible reaction in which hydroxymethyl group from 5,10-methylenetetrahydrofolate is transferred onto alpha-ketoisovalerate to form ketopantoate. This Hahella chejuensis (strain KCTC 2396) protein is 3-methyl-2-oxobutanoate hydroxymethyltransferase 2.